Here is a 639-residue protein sequence, read N- to C-terminus: Transcription factor phomR' (639 aa).

Residues 14-41 (CWTCRLRRKKCNEGGPPCDNCEARGIHC) constitute a DNA-binding region (zn(2)-C6 fungal-type). Disordered regions lie at residues 58–136 (REEA…AGTG) and 476–499 (LPRS…TGPE). Low complexity predominate over residues 68-108 (SGRGRSYSRSSSTAAAAAPKPAEGAMVTGGSSSSSRGSGSS).

It localises to the nucleus. Transcription factor; part of the gene cluster that mediates the biosynthesis of the phomopsins, a group of hexapeptide mycotoxins which infects lupins and causes lupinosis disease in livestock. May play a role in the regulation of the production of phomopsins. In Diaporthe leptostromiformis (Lupinosis disease fungus), this protein is Transcription factor phomR'.